Reading from the N-terminus, the 344-residue chain is Inositol 2-dehydrogenase/D-chiro-inositol 3-dehydrogenase (344 aa).

This sequence belongs to the Gfo/Idh/MocA family. Homotetramer.

The catalysed reaction is myo-inositol + NAD(+) = scyllo-inosose + NADH + H(+). The enzyme catalyses 1D-chiro-inositol + NAD(+) = scyllo-inosine + NADH + H(+). Its pathway is polyol metabolism; myo-inositol degradation into acetyl-CoA; acetyl-CoA from myo-inositol: step 1/7. In terms of biological role, involved in the oxidation of myo-inositol (MI) and D-chiro-inositol (DCI) to 2-keto-myo-inositol (2KMI or 2-inosose) and 1-keto-D-chiro-inositol (1KDCI), respectively. In Bacillus velezensis (strain DSM 23117 / BGSC 10A6 / LMG 26770 / FZB42) (Bacillus amyloliquefaciens subsp. plantarum), this protein is Inositol 2-dehydrogenase/D-chiro-inositol 3-dehydrogenase.